Consider the following 156-residue polypeptide: Probable cyclic pyranopterin monophosphate synthase (156 aa).

Substrate is bound by residues 74–76 (LCH) and 110–111 (ME). Asp125 is a catalytic residue.

This sequence belongs to the MoaC family. As to quaternary structure, homohexamer; trimer of dimers.

It carries out the reaction (8S)-3',8-cyclo-7,8-dihydroguanosine 5'-triphosphate = cyclic pyranopterin phosphate + diphosphate. It functions in the pathway cofactor biosynthesis; molybdopterin biosynthesis. Its function is as follows. Catalyzes the conversion of (8S)-3',8-cyclo-7,8-dihydroguanosine 5'-triphosphate to cyclic pyranopterin monophosphate (cPMP). The sequence is that of Probable cyclic pyranopterin monophosphate synthase from Thermococcus kodakarensis (strain ATCC BAA-918 / JCM 12380 / KOD1) (Pyrococcus kodakaraensis (strain KOD1)).